A 147-amino-acid chain; its full sequence is UPF0208 membrane protein SO_2914 (147 aa).

2 helical membrane passes run 40–60 (LAIL…LYTY) and 68–88 (ALTI…WLGW).

This sequence belongs to the UPF0208 family.

It localises to the cell inner membrane. The sequence is that of UPF0208 membrane protein SO_2914 from Shewanella oneidensis (strain ATCC 700550 / JCM 31522 / CIP 106686 / LMG 19005 / NCIMB 14063 / MR-1).